Here is a 589-residue protein sequence, read N- to C-terminus: Alpha-1,2-mannosyltransferase MNN22 (589 aa).

The Cytoplasmic portion of the chain corresponds to 1–16 (MGSIFKDGRRILVRPK). Residues 17 to 33 (SLIICLCLISIIFTQLI) form a helical membrane-spanning segment. Topologically, residues 34-589 (RYQYQLIADE…NTIAWLGKKT (556 aa)) are extracellular. The interval 50-77 (EDHSSSQSLKNTKLNSTRSSSPISPPKS) is disordered. The span at 54–71 (SSQSLKNTKLNSTRSSSP) shows a compositional bias: polar residues. 3 N-linked (GlcNAc...) asparagine glycosylation sites follow: Asn64, Asn332, and Asn530.

It belongs to the MNN1/MNT family.

The protein resides in the golgi apparatus membrane. It participates in protein modification; protein glycosylation. Its function is as follows. Alpha-1,2-mannosyltransferase required for cell wall integrity. Responsible for addition of the first alpha-1,2-linked mannose to form the branches on the mannan backbone of oligosaccharides. Addition of alpha-1,2-mannose is required for stabilization of the alpha-1,6-mannose backbone and hence regulates mannan fibril length; and is important for both immune recognition and virulence. The protein is Alpha-1,2-mannosyltransferase MNN22 (MNN22) of Candida albicans (strain SC5314 / ATCC MYA-2876) (Yeast).